The primary structure comprises 404 residues: uncharacterized protein (404 aa).

8 consecutive transmembrane segments (helical) span residues M1–S21, V32–G52, A89–Y109, L182–A202, L261–F281, G285–V305, A344–L364, and K384–I404.

The protein belongs to the concentrative nucleoside transporter (CNT) (TC 2.A.41) family.

Its subcellular location is the cell membrane. This is an uncharacterized protein from Bacillus subtilis (strain 168).